The following is a 100-amino-acid chain: MARKSLIQREKKRQKLEQKYHLIRRSSKKEISKVPSLNEKWKIHGKLQSLPRNSAPIRLHRRCFSTGRPRANYRDFGLSGHILREMVQACLLPGATRSSW.

Belongs to the universal ribosomal protein uS14 family. Part of the 30S ribosomal subunit.

The protein resides in the plastid. The protein localises to the chloroplast. Functionally, binds 16S rRNA, required for the assembly of 30S particles. This Morus indica (Mulberry) protein is Small ribosomal subunit protein uS14c.